The following is a 403-amino-acid chain: tRNA(Met) cytidine acetate ligase (403 aa).

ATP-binding positions include 7 to 20 (VVEY…HAYH), glycine 101, asparagine 164, and 189 to 190 (RI).

It belongs to the TmcAL family.

It is found in the cytoplasm. The enzyme catalyses cytidine(34) in elongator tRNA(Met) + acetate + ATP = N(4)-acetylcytidine(34) in elongator tRNA(Met) + AMP + diphosphate. Functionally, catalyzes the formation of N(4)-acetylcytidine (ac(4)C) at the wobble position of elongator tRNA(Met), using acetate and ATP as substrates. First activates an acetate ion to form acetyladenylate (Ac-AMP) and then transfers the acetyl group to tRNA to form ac(4)C34. This chain is tRNA(Met) cytidine acetate ligase, found in Lysinibacillus sphaericus (strain C3-41).